The chain runs to 320 residues: Malate dehydrogenase (320 aa).

NAD(+)-binding positions include Gly-10–Gly-15 and Asp-34. Substrate contacts are provided by Arg-83 and Arg-89. NAD(+) is bound by residues Asn-96 and Ile-119 to Asn-121. Substrate is bound by residues Asn-121 and Arg-152. Residue His-176 is the Proton acceptor of the active site.

This sequence belongs to the LDH/MDH superfamily. MDH type 3 family.

It carries out the reaction (S)-malate + NAD(+) = oxaloacetate + NADH + H(+). Catalyzes the reversible oxidation of malate to oxaloacetate. The chain is Malate dehydrogenase from Novosphingobium aromaticivorans (strain ATCC 700278 / DSM 12444 / CCUG 56034 / CIP 105152 / NBRC 16084 / F199).